The primary structure comprises 258 residues: NH(3)-dependent NAD(+) synthetase (258 aa).

34–41 (GLSGGIDS) contacts ATP. Mg(2+) is bound at residue Asp40. Deamido-NAD(+) is bound at residue Arg116. Thr136 provides a ligand contact to ATP. Mg(2+) is bound at residue Glu141. ATP contacts are provided by Lys165 and Ser187.

The protein belongs to the NAD synthetase family. As to quaternary structure, homodimer.

The enzyme catalyses deamido-NAD(+) + NH4(+) + ATP = AMP + diphosphate + NAD(+) + H(+). It participates in cofactor biosynthesis; NAD(+) biosynthesis; NAD(+) from deamido-NAD(+) (ammonia route): step 1/1. In terms of biological role, catalyzes the ATP-dependent amidation of deamido-NAD to form NAD. Uses ammonia as a nitrogen source. This is NH(3)-dependent NAD(+) synthetase from Fusobacterium nucleatum subsp. nucleatum (strain ATCC 25586 / DSM 15643 / BCRC 10681 / CIP 101130 / JCM 8532 / KCTC 2640 / LMG 13131 / VPI 4355).